A 120-amino-acid chain; its full sequence is Large ribosomal subunit protein uL18 (120 aa).

Belongs to the universal ribosomal protein uL18 family. In terms of assembly, part of the 50S ribosomal subunit; part of the 5S rRNA/L5/L18/L25 subcomplex. Contacts the 5S and 23S rRNAs.

In terms of biological role, this is one of the proteins that bind and probably mediate the attachment of the 5S RNA into the large ribosomal subunit, where it forms part of the central protuberance. In Methylobacterium nodulans (strain LMG 21967 / CNCM I-2342 / ORS 2060), this protein is Large ribosomal subunit protein uL18.